A 177-amino-acid chain; its full sequence is Probable DNA-directed RNA polymerase subunit delta (177 aa).

Residues 14 to 81 enclose the HTH HARE-type domain; the sequence is CSMIEVVHSV…GENRWGLRSW (68 aa). The segment at 91–177 is disordered; that stretch reads ILPQPKPKKK…DETEEEEEEL (87 aa). The segment covering 106–177 has biased composition (acidic residues); sequence DGFDDYIEED…DETEEEEEEL (72 aa).

Belongs to the RpoE family. As to quaternary structure, RNAP is composed of a core of 2 alpha, a beta and a beta' subunits. The core is associated with a delta subunit and one of several sigma factors.

Functionally, participates in both the initiation and recycling phases of transcription. In the presence of the delta subunit, RNAP displays an increased specificity of transcription, a decreased affinity for nucleic acids, and an increased efficiency of RNA synthesis because of enhanced recycling. The chain is Probable DNA-directed RNA polymerase subunit delta from Bacillus cereus (strain G9842).